A 440-amino-acid chain; its full sequence is L-gulonolactone oxidase (440 aa).

In terms of domain architecture, FAD-binding PCMH-type spans tyrosine 17–alanine 187. Position 54 is a pros-8alpha-FAD histidine (histidine 54). A helical transmembrane segment spans residues tryptophan 245–proline 267.

It belongs to the oxygen-dependent FAD-linked oxidoreductase family. It depends on FAD as a cofactor.

The protein localises to the microsome membrane. Its subcellular location is the endoplasmic reticulum membrane. The catalysed reaction is L-gulono-1,4-lactone + O2 = L-ascorbate + H2O2 + H(+). Its pathway is cofactor biosynthesis; L-ascorbate biosynthesis via UDP-alpha-D-glucuronate pathway; L-ascorbate from UDP-alpha-D-glucuronate: step 4/4. Functionally, oxidizes L-gulono-1,4-lactone to hydrogen peroxide and L-xylo-hexulonolactone which spontaneously isomerizes to L-ascorbate. The protein is L-gulonolactone oxidase (GULO) of Scyliorhinus torazame (Cloudy catshark).